A 320-amino-acid chain; its full sequence is Lipoyl synthase (320 aa).

Positions 67, 72, 78, 93, 97, 100, and 307 each coordinate [4Fe-4S] cluster. The Radical SAM core domain occupies 79–296 (FNHGTATFMI…RDKANEMGFE (218 aa)).

The protein belongs to the radical SAM superfamily. Lipoyl synthase family. It depends on [4Fe-4S] cluster as a cofactor.

The protein localises to the cytoplasm. The enzyme catalyses [[Fe-S] cluster scaffold protein carrying a second [4Fe-4S](2+) cluster] + N(6)-octanoyl-L-lysyl-[protein] + 2 oxidized [2Fe-2S]-[ferredoxin] + 2 S-adenosyl-L-methionine + 4 H(+) = [[Fe-S] cluster scaffold protein] + N(6)-[(R)-dihydrolipoyl]-L-lysyl-[protein] + 4 Fe(3+) + 2 hydrogen sulfide + 2 5'-deoxyadenosine + 2 L-methionine + 2 reduced [2Fe-2S]-[ferredoxin]. Its pathway is protein modification; protein lipoylation via endogenous pathway; protein N(6)-(lipoyl)lysine from octanoyl-[acyl-carrier-protein]: step 2/2. Catalyzes the radical-mediated insertion of two sulfur atoms into the C-6 and C-8 positions of the octanoyl moiety bound to the lipoyl domains of lipoate-dependent enzymes, thereby converting the octanoylated domains into lipoylated derivatives. This is Lipoyl synthase from Haemophilus influenzae (strain 86-028NP).